We begin with the raw amino-acid sequence, 165 residues long: Chorismate pyruvate-lyase (165 aa).

Met-35, Arg-77, Leu-115, and Glu-156 together coordinate substrate.

The protein belongs to the UbiC family. As to quaternary structure, monomer.

The protein localises to the cytoplasm. It catalyses the reaction chorismate = 4-hydroxybenzoate + pyruvate. The protein operates within cofactor biosynthesis; ubiquinone biosynthesis. In terms of biological role, removes the pyruvyl group from chorismate, with concomitant aromatization of the ring, to provide 4-hydroxybenzoate (4HB) for the ubiquinone pathway. This is Chorismate pyruvate-lyase from Escherichia coli O157:H7.